Reading from the N-terminus, the 88-residue chain is Cell division topological specificity factor (88 aa).

It belongs to the MinE family.

Prevents the cell division inhibition by proteins MinC and MinD at internal division sites while permitting inhibition at polar sites. This ensures cell division at the proper site by restricting the formation of a division septum at the midpoint of the long axis of the cell. This chain is Cell division topological specificity factor, found in Clostridium novyi (strain NT).